The sequence spans 245 residues: Small ribosomal subunit protein uS2 (245 aa).

The protein belongs to the universal ribosomal protein uS2 family.

The protein is Small ribosomal subunit protein uS2 of Pseudomonas fluorescens (strain Pf0-1).